Here is a 180-residue protein sequence, read N- to C-terminus: Flavin prenyltransferase UbiX (180 aa).

FMN is bound by residues 9–11 (GAS), Ser33, 84–87 (SITT), and Arg119. Dimethylallyl phosphate contacts are provided by Tyr149 and Arg165.

It belongs to the UbiX/PAD1 family.

It catalyses the reaction dimethylallyl phosphate + FMNH2 = prenylated FMNH2 + phosphate. Flavin prenyltransferase that catalyzes the synthesis of the prenylated FMN cofactor (prenyl-FMN) for 4-hydroxy-3-polyprenylbenzoic acid decarboxylase UbiD. The prenyltransferase is metal-independent and links a dimethylallyl moiety from dimethylallyl monophosphate (DMAP) to the flavin N5 and C6 atoms of FMN. The polypeptide is Flavin prenyltransferase UbiX (Thermoplasma acidophilum (strain ATCC 25905 / DSM 1728 / JCM 9062 / NBRC 15155 / AMRC-C165)).